The sequence spans 287 residues: Flagellin (287 aa).

Belongs to the bacterial flagellin family.

The protein resides in the secreted. It is found in the bacterial flagellum. Functionally, flagellin is the subunit protein which polymerizes to form the filaments of bacterial flagella. This chain is Flagellin (flaA), found in Listeria innocua serovar 6a (strain ATCC BAA-680 / CLIP 11262).